Reading from the N-terminus, the 337-residue chain is Phosphate acyltransferase (337 aa).

This sequence belongs to the PlsX family. As to quaternary structure, homodimer. Probably interacts with PlsY.

The protein localises to the cytoplasm. The catalysed reaction is a fatty acyl-[ACP] + phosphate = an acyl phosphate + holo-[ACP]. It participates in lipid metabolism; phospholipid metabolism. Its function is as follows. Catalyzes the reversible formation of acyl-phosphate (acyl-PO(4)) from acyl-[acyl-carrier-protein] (acyl-ACP). This enzyme utilizes acyl-ACP as fatty acyl donor, but not acyl-CoA. The chain is Phosphate acyltransferase from Polynucleobacter necessarius subsp. necessarius (strain STIR1).